We begin with the raw amino-acid sequence, 495 residues long: Ectonucleoside triphosphate diphosphohydrolase 2 (495 aa).

The Cytoplasmic segment spans residues 1–7 (MAGKVRS). A helical transmembrane segment spans residues 8 to 28 (LLPPLLLAAAGLAGLLLLCVP). The Extracellular portion of the chain corresponds to 29 to 462 (TRDVREPPAL…PGLRKGTDFS (434 aa)). An N-linked (GlcNAc...) asparagine glycan is attached at Asn-64. An intrachain disulfide couples Cys-75 to Cys-99. Asn-129 carries N-linked (GlcNAc...) asparagine glycosylation. Glu-165 (proton acceptor) is an active-site residue. Residue 204 to 208 (GASTQ) coordinates ATP. 4 disulfides stabilise this stretch: Cys-242–Cys-284, Cys-265–Cys-310, Cys-323–Cys-328, and Cys-377–Cys-399. N-linked (GlcNAc...) asparagine glycosylation occurs at Asn-294. N-linked (GlcNAc...) asparagine glycans are attached at residues Asn-378 and Asn-443. A helical membrane pass occupies residues 463-483 (SWVVLLLLFASALLAALVLLL). The Cytoplasmic segment spans residues 484-495 (RQVHSAKLPSTI).

Belongs to the GDA1/CD39 NTPase family. It depends on Ca(2+) as a cofactor. Mg(2+) is required as a cofactor. As to expression, brain, placenta, skeletal muscle, kidney, pancreas, heart, ovary, testis, colon, small intestine, prostate and pancreas. No expression in adult thymus, spleen, lung, liver and peripheral blood leukocytes.

The protein resides in the cell membrane. It is found in the endoplasmic reticulum membrane. Its function is as follows. In the nervous system, could hydrolyze ATP and other nucleotides to regulate purinergic neurotransmission. Hydrolyzes ADP only to a marginal extent. The order of activity with different substrates is ATP &gt; GTP &gt; CTP = ITP &gt; UTP &gt;&gt; ADP = UDP. The chain is Ectonucleoside triphosphate diphosphohydrolase 2 (ENTPD2) from Homo sapiens (Human).